The sequence spans 365 residues: Histidinol-phosphate aminotransferase 2 (365 aa).

Lys-222 bears the N6-(pyridoxal phosphate)lysine mark.

This sequence belongs to the class-II pyridoxal-phosphate-dependent aminotransferase family. Histidinol-phosphate aminotransferase subfamily. In terms of assembly, homodimer. Requires pyridoxal 5'-phosphate as cofactor.

It carries out the reaction L-histidinol phosphate + 2-oxoglutarate = 3-(imidazol-4-yl)-2-oxopropyl phosphate + L-glutamate. The protein operates within amino-acid biosynthesis; L-histidine biosynthesis; L-histidine from 5-phospho-alpha-D-ribose 1-diphosphate: step 7/9. In Bordetella parapertussis (strain 12822 / ATCC BAA-587 / NCTC 13253), this protein is Histidinol-phosphate aminotransferase 2 (hisC2).